The chain runs to 413 residues: MMKEASEPLASVTSINKQDSKVQDGEIRKEKIGTITPSKQHSSVHFFPKIMDSDSTTLIPLSRSFSQEMPIGFYQITSTQNSSTLSSRGQLASKSTILSCSHKDSSLGKQSTSSMVPRRQPQSSSDVDTYTFGNGEDYFLSLFGESKKLTAHTPQAENVSEHLSVILEEVGQFTSSSLGEIKIAEVNIKGLFVRLVNSSNEKEVEIGNHILQQNVNGHAVSLYQFPDNITLQANSTVTVWAAASEAKPQPPTDFVWEEQSKFRSSPDCTTILCKPNGEAIAWYTPIHWKQAWEKLETDIEFERCSVVVPSMRNHMFGWITASVSSTNEEKEEPIQKTPSQVYPVLYREKEIPPTVLPNKSPWCRNPNTSPHPYSSLIDSHDSDISESSLDTQLKPQPTKPKPDPGTKKKKAKS.

Disordered regions lie at residues 1–25 (MMKE…VQDG) and 102–128 (HKDS…SDVD). The segment covering 107 to 128 (LGKQSTSSMVPRRQPQSSSDVD) has biased composition (polar residues). Residues 169–287 (EVGQFTSSSL…EAIAWYTPIH (119 aa)) enclose the LTD domain. Residues 356–413 (LPNKSPWCRNPNTSPHPYSSLIDSHDSDISESSLDTQLKPQPTKPKPDPGTKKKKAKS) form a disordered region. Low complexity predominate over residues 385-396 (SESSLDTQLKPQ).

Belongs to the intermediate filament family.

The chain is Lamin tail domain-containing protein 1 (Lmntd1) from Mus musculus (Mouse).